The primary structure comprises 260 residues: Transcription repressor OFP13 (260 aa).

Residues 150–211 (VAMESEDPYG…VSAFVDLLSG (62 aa)) form the OVATE domain.

Expressed in roots, rosette and cauline leaves, shoots, stems, flower buds and siliques.

It localises to the nucleus. Transcriptional repressor that regulates multiple aspects of plant growth and development through the regulation of BEL1-LIKE (BLH) and KNOX TALE (KNAT) homeodomain transcription factors. In Arabidopsis thaliana (Mouse-ear cress), this protein is Transcription repressor OFP13 (OFP13).